Consider the following 335-residue polypeptide: DNA-directed RNA polymerases I and III subunit RPAC1 (335 aa).

N-acetylserine is present on Ser2. Position 17 is a phosphoserine (Ser17).

It belongs to the archaeal Rpo3/eukaryotic RPB3 RNA polymerase subunit family. Component of the RNA polymerase I (Pol I) complex consisting of 14 subunits: RPA135, RPA190, RPC40, RPA14, RPB5, RPO26, RPA43, RPB8, RPA12, RPB10, RPC19, RPC10, RPA49 and RPA34. The complex is composed of a horseshoe-shaped core containing ten subunits (RPA135, RPA190, RPB5, RPO26, RPB8, RPB10, RPC10, RPA12, RPC19 and RPC40) where RPA135 and RPA190 form the DNA-binding cleft. Outside of the core, RPA14 and RPA43 form the stalk that mediates interactions with transcription initiation factors and newly synthesized RNA. Component of the RNA polymerase III (Pol III) complex consisting of at least 17 subunits. Interacts with the RPC19/RPAC2 and RPC53/RPC4. Interacts with retrotransposons Ty integrase, targeting Ty1, Ty2 and Ty4 integration upstream of pol III-transcribed genes.

It is found in the nucleus. The protein resides in the nucleolus. DNA-dependent RNA polymerases catalyze the transcription of DNA into RNA using the four ribonucleoside triphosphates as substrates. Common component of RNA polymerases I (Pol I) and III (Pol III) which synthesize ribosomal RNA precursors and small RNAs, such as 5S rRNA and tRNAs, respectively. RPC40 is part of the polymerase core and may function as a clamp element that moves to open and close the cleft. Plays an important role in targeting retrotransposons Ty integration upstream of pol III-transcribed genes such as tRNA genes, allowing Ty1, Ty2 and Ty4 to proliferate and yet minimizing genetic damage. This Saccharomyces cerevisiae (strain ATCC 204508 / S288c) (Baker's yeast) protein is DNA-directed RNA polymerases I and III subunit RPAC1.